Reading from the N-terminus, the 346-residue chain is Probable dual-specificity RNA methyltransferase RlmN (346 aa).

Catalysis depends on glutamate 92, which acts as the Proton acceptor. Positions 98 to 332 (TDQRLTVCVS…VSLRASRGLD (235 aa)) constitute a Radical SAM core domain. Residues cysteine 105 and cysteine 337 are joined by a disulfide bond. [4Fe-4S] cluster is bound by residues cysteine 112, cysteine 116, and cysteine 119. S-adenosyl-L-methionine contacts are provided by residues 159–160 (GE), serine 189, 218–220 (SLH), and asparagine 294. The active-site S-methylcysteine intermediate is cysteine 337.

This sequence belongs to the radical SAM superfamily. RlmN family. It depends on [4Fe-4S] cluster as a cofactor.

The protein localises to the cytoplasm. The catalysed reaction is adenosine(2503) in 23S rRNA + 2 reduced [2Fe-2S]-[ferredoxin] + 2 S-adenosyl-L-methionine = 2-methyladenosine(2503) in 23S rRNA + 5'-deoxyadenosine + L-methionine + 2 oxidized [2Fe-2S]-[ferredoxin] + S-adenosyl-L-homocysteine. It carries out the reaction adenosine(37) in tRNA + 2 reduced [2Fe-2S]-[ferredoxin] + 2 S-adenosyl-L-methionine = 2-methyladenosine(37) in tRNA + 5'-deoxyadenosine + L-methionine + 2 oxidized [2Fe-2S]-[ferredoxin] + S-adenosyl-L-homocysteine. Functionally, specifically methylates position 2 of adenine 2503 in 23S rRNA and position 2 of adenine 37 in tRNAs. The chain is Probable dual-specificity RNA methyltransferase RlmN from Synechococcus sp. (strain CC9311).